A 288-amino-acid polypeptide reads, in one-letter code: NAD(P)H-hydrate epimerase (288 aa).

A mitochondrion-targeting transit peptide spans 1–47 (MSRLRALLGLGLLVAGSRVPRIKSQTIACRSGPTWWGPQRLNSGGRW). Ser49 is modified (phosphoserine). One can recognise a YjeF N-terminal domain in the interval 65–275 (AQAVDQELFN…ALEKKYQLNL (211 aa)). Residue 119–123 (NNGGD) participates in (6S)-NADPHX binding. Residue Asn120 coordinates K(+). The residue at position 144 (Lys144) is an N6-succinyllysine. K(+) is bound at residue Asp185. (6S)-NADPHX is bound by residues 189–195 (GFSFKGD) and Asp218. K(+) is bound at residue Ser221.

It belongs to the NnrE/AIBP family. As to quaternary structure, homodimer. Interacts with APOA1 and APOA2. It depends on K(+) as a cofactor. Post-translationally, undergoes physiological phosphorylation during sperm capacitation, downstream to PKA activation. Ubiquitously expressed, with highest levels in kidney, heart and liver. Present in cerebrospinal fluid and urine but not in serum from healthy patients. Present in serum of sepsis patients (at protein level).

The protein localises to the mitochondrion. The protein resides in the secreted. The enzyme catalyses (6R)-NADHX = (6S)-NADHX. It carries out the reaction (6R)-NADPHX = (6S)-NADPHX. Functionally, catalyzes the epimerization of the S- and R-forms of NAD(P)HX, a damaged form of NAD(P)H that is a result of enzymatic or heat-dependent hydration. This is a prerequisite for the S-specific NAD(P)H-hydrate dehydratase to allow the repair of both epimers of NAD(P)HX. Accelerates cholesterol efflux from endothelial cells to high-density lipoprotein (HDL) and thereby regulates angiogenesis. The protein is NAD(P)H-hydrate epimerase of Homo sapiens (Human).